We begin with the raw amino-acid sequence, 330 residues long: Polygalacturonase inhibitor (330 aa).

The first 24 residues, 1–24 (MELKFSTFLSLTLLFSSVLNPALS), serve as a signal peptide directing secretion. Disulfide bonds link C27–C57 and C58–C65. 7 LRR repeats span residues 69-92 (TNRI…LVGD), 93-118 (LPYL…IAKL), 119-141 (KGLK…FLSQ), 142-166 (LKNL…LSEL), 167-192 (PNLG…QFIG), 194-215 (VPDL…FAQM), and 217-237 (FTSI…IFGL). 4 N-linked (GlcNAc...) asparagine glycosylation sites follow: N106, N130, N144, and N154. N238 and N254 each carry an N-linked (GlcNAc...) asparagine glycan. 3 LRR repeats span residues 239–261 (KTTQ…VEFP), 262–285 (TSLT…FTQL), and 287–309 (FQFL…KLQS). N-linked (GlcNAc...) asparagine glycosylation occurs at N291. Intrachain disulfides connect C298–C320 and C322–C329.

The protein belongs to the polygalacturonase-inhibiting protein family. In terms of assembly, homodimer. Post-translationally, N-linked glycosylated. As to expression, mostly expressed in fruits, and, to a lower extent, in flowers and leaves.

It is found in the secreted. Its subcellular location is the extracellular space. The protein localises to the apoplast. The protein resides in the cell wall. In terms of biological role, inhibitor of fungal polygalacturonase. It is an important factor for plant resistance to phytopathogenic fungi. The chain is Polygalacturonase inhibitor (PGIP) from Pyrus communis (Pear).